The sequence spans 506 residues: Mitogen-activated protein kinase 13 (506 aa).

Residues 13 to 304 enclose the Protein kinase domain; that stretch reads YQIQEVVGKG…AEEALADPYF (292 aa). Residues 19 to 27 and Lys42 each bind ATP; that span reads VGKGSYGVV. Residue Asp139 is the Proton acceptor of the active site. Thr175 carries the post-translational modification Phosphothreonine. The TXY signature appears at 175-177; it reads TDY. Tyr177 bears the Phosphotyrosine mark. The disordered stretch occupies residues 384 to 421; that stretch reads YSRGERSTPLRRQHASLPRERVCSSVDSNNQDSDNEER.

Belongs to the protein kinase superfamily. CMGC Ser/Thr protein kinase family. MAP kinase subfamily. In terms of processing, dually phosphorylated on Thr-175 and Tyr-177, which activates the enzyme.

The enzyme catalyses L-seryl-[protein] + ATP = O-phospho-L-seryl-[protein] + ADP + H(+). The catalysed reaction is L-threonyl-[protein] + ATP = O-phospho-L-threonyl-[protein] + ADP + H(+). Activated by threonine and tyrosine phosphorylation. The chain is Mitogen-activated protein kinase 13 (MPK13) from Oryza sativa subsp. indica (Rice).